Reading from the N-terminus, the 532-residue chain is SET and MYND domain-containing protein DDB_G0288495 (532 aa).

One can recognise an SET domain in the interval 25-448 (PWIEVKSVSE…ENQELLITYI (424 aa)). Residues 70 to 116 (CTTCFKILLESNRHNFQTCPSCFQVNYCSNYCKQYSKIETKHTELEC) form an MYND-type; degenerate zinc finger. Positions 199-240 (INSKNNNEFENEEEEEEEQEQKGEGEQEENENNENNEKVKKK) form a coiled coil. Residues 204-234 (NNEFENEEEEEEEQEQKGEGEQEENENNENN) form a disordered region. Over residues 207-217 (FENEEEEEEEQ) the composition is skewed to acidic residues.

It belongs to the class V-like SAM-binding methyltransferase superfamily.

Its function is as follows. Probable methyltransferase. The sequence is that of SET and MYND domain-containing protein DDB_G0288495 from Dictyostelium discoideum (Social amoeba).